Consider the following 157-residue polypeptide: MKCLLIATGERVPTWVAQGFAEYHRRLSYWLPLELVEIEPSMRGKNHDPQRAIEDEGRRVMAALPKQPYAVTLDVKGKPLNSEQLAQRMEHWRGLGRNLVFLIGGPEGHSQEVLNISNERWSLGPLTLPHMLVRLIVVEQLYRAATILTNHPYHRGK.

S-adenosyl-L-methionine contacts are provided by residues Leu-73, Gly-104, and 123 to 128; that span reads LGPLTL.

Belongs to the RNA methyltransferase RlmH family. As to quaternary structure, homodimer.

The protein resides in the cytoplasm. The enzyme catalyses pseudouridine(1915) in 23S rRNA + S-adenosyl-L-methionine = N(3)-methylpseudouridine(1915) in 23S rRNA + S-adenosyl-L-homocysteine + H(+). Functionally, specifically methylates the pseudouridine at position 1915 (m3Psi1915) in 23S rRNA. This is Ribosomal RNA large subunit methyltransferase H from Xylella fastidiosa (strain M12).